The following is a 486-amino-acid chain: uncharacterized protein (486 aa).

LRR repeat units lie at residues 18–39 (NLKKIIINRDNVININILKKLV), 43–59 (ELHIIYYDNNILNNIPE), 60–81 (NIKSLYISNLNIINLNFITKLK), 82–103 (NITYLDISYNKNSNISNIILPH), 104–125 (SIEFLNCESCNINDYNFINNLV), 126–147 (NLKKLIISKNKFGNFNNVFPIS), 148–168 (IVELNMESIQIKDYKFIEKLI), 169–190 (NLKKLDISFNVKKNNIHLIKFP), and 198–219 (DYQSYKENYNYLKNLSNIIEYE).

This is an uncharacterized protein from Amsacta moorei entomopoxvirus (AmEPV).